Consider the following 142-residue polypeptide: uncharacterized protein (142 aa).

3 helical membrane passes run 3-23 (LIFI…FNLL), 30-50 (SVSW…AVWI), and 91-111 (FFLL…AYFS).

Its subcellular location is the membrane. This is an uncharacterized protein from Saccharomyces cerevisiae (strain ATCC 204508 / S288c) (Baker's yeast).